Reading from the N-terminus, the 341-residue chain is Eukaryotic translation initiation factor 2 subunit 1 (341 aa).

Residues 18-89 (NELVMVRIES…DKGYIDLSKR (72 aa)) enclose the S1 motif domain. Residues 301–341 (LMEQLEVENQDGDGEEHEDDDDDDDDEEEEEKPKEKKSSRK) are disordered. A compositionally biased stretch (acidic residues) spans 303 to 330 (EQLEVENQDGDGEEHEDDDDDDDDEEEE). The segment covering 331–341 (EKPKEKKSSRK) has biased composition (basic and acidic residues).

The protein belongs to the eIF-2-alpha family. As to quaternary structure, eukaryotic translation initiation factor 2 eIF2 is a heterotrimeric complex composed of an alpha, a beta and a gamma subunit.

The protein localises to the cytoplasm. It is found in the cytosol. In terms of biological role, eIF-2 functions in the early steps of protein synthesis by forming a ternary complex with GTP and initiator tRNA. This complex binds to a 40S ribosomal subunit, followed by mRNA binding to form a 43S pre-initiation complex. Junction of the 60S ribosomal subunit to form the 80S initiation complex is preceded by hydrolysis of the GTP bound to eIF-2 and release of an eIF-2-GDP binary complex. In order for eIF-2 to recycle and catalyze another round of initiation, the GDP bound to eIF-2 must exchange with GTP by way of a reaction catalyzed by eIF2B. This chain is Eukaryotic translation initiation factor 2 subunit 1 (eif2s1), found in Dictyostelium discoideum (Social amoeba).